Consider the following 731-residue polypeptide: Nitrogen permease regulator 3 (731 aa).

The signal sequence occupies residues Met1 to Ala23. Disordered regions lie at residues Asn34–Val90, Arg129–Val156, Thr168–Gly187, and Gly549–Lys599. The span at Pro45–Ser55 shows a compositional bias: basic residues. Positions Ser58–Thr70 are enriched in low complexity. The segment covering Arg129–Thr138 has biased composition (basic residues). Positions Lys139–Val156 are enriched in basic and acidic residues. Residues Asp555–Asn566 show a composition bias toward basic and acidic residues. Over residues Ser572–Asp583 the composition is skewed to low complexity.

Belongs to the NPR3 family.

Mediates inactivation of the TORC1 complex in response to amino acid starvation. Required for meiotic nuclear division. The polypeptide is Nitrogen permease regulator 3 (npr3) (Aspergillus oryzae (strain ATCC 42149 / RIB 40) (Yellow koji mold)).